The chain runs to 367 residues: Pentatricopeptide repeat-containing protein At1g11900 (367 aa).

8 PPR repeats span residues 69–103 (SKIDYTNLVEKFTRDGNLSGAYDLLQSLQEKNICL), 104–139 (PISVFKNLLAAAGELNDMKLSCRVFREVLILPGKEP), 141–175 (SSDCYLNLARAFINTDDCTYLTSLLKEISESSLPY), 176–210 (RLIVMNRIIFAFAETRQIDKVLMILKEMKEWECKP), 211–241 (DVITYNSVLDILGRAGLVNEILGVLSTMKED), 247–281 (NIITYNTVLNGMRKACRFDMCLVIYNEMVQCGIEP), 282–316 (DLLSYTAVIDSLGRSGNVKESLRLFDEMKQRQIRP), and 317–347 (SVYVYRALIDCLKKSGDFQSALQLSDELKNT).

This sequence belongs to the PPR family. P subfamily.

This Arabidopsis thaliana (Mouse-ear cress) protein is Pentatricopeptide repeat-containing protein At1g11900.